The sequence spans 360 residues: Peptide chain release factor 1 (360 aa).

At glutamine 236 the chain carries N5-methylglutamine.

The protein belongs to the prokaryotic/mitochondrial release factor family. Post-translationally, methylated by PrmC. Methylation increases the termination efficiency of RF1.

The protein resides in the cytoplasm. In terms of biological role, peptide chain release factor 1 directs the termination of translation in response to the peptide chain termination codons UAG and UAA. This Lactiplantibacillus plantarum (strain ATCC BAA-793 / NCIMB 8826 / WCFS1) (Lactobacillus plantarum) protein is Peptide chain release factor 1.